Here is a 281-residue protein sequence, read N- to C-terminus: uncharacterized protein (281 aa).

4 consecutive transmembrane segments (helical) span residues 8–28, 97–117, 147–167, and 210–230; these read ALPV…FIWS, LAVA…RGYG, PARI…GLAV, and IASV…IVPA.

The protein to S.pombe bem46 and yeast YNL320w.

It localises to the cell membrane. This is an uncharacterized protein from Mycobacterium tuberculosis (strain ATCC 25618 / H37Rv).